The sequence spans 241 residues: Phycocyanobilin:ferredoxin oxidoreductase (241 aa).

The protein belongs to the HY2 family.

The enzyme catalyses (2R,3Z)-phycocyanobilin + 4 oxidized [2Fe-2S]-[ferredoxin] = biliverdin IXalpha + 4 reduced [2Fe-2S]-[ferredoxin] + 4 H(+). Catalyzes the four-electron reduction of biliverdin IX-alpha (2-electron reduction at both the A and D rings); the reaction proceeds via an isolatable 2-electron intermediate, 181,182-dihydrobiliverdin. The polypeptide is Phycocyanobilin:ferredoxin oxidoreductase (Prochlorococcus marinus (strain MIT 9312)).